A 195-amino-acid polypeptide reads, in one-letter code: Calcium channel flower (195 aa).

3 helical membrane passes run 34–54, 66–88, and 117–137; these read LLGIVAAFFAILFGLWNVISI, IIQMVAGFVVMLLEAPCCFVCIE, and IFMCFGLASLFGSGLIFATGV.

The protein belongs to the calcium channel flower family. As to quaternary structure, homomultimer. Associates with the dally/ magu complex.

The protein resides in the cell membrane. The protein localises to the cytoplasmic vesicle. It is found in the secretory vesicle. It localises to the synaptic vesicle membrane. Its subcellular location is the presynaptic cell membrane. The protein resides in the endosome. With respect to regulation, channel activity is inhibited by La(3+), which reduces Ca(2+) influx and thus inhibits it's function in promoting activity-dependent bulk endocytosis (ADBE) in response to high stimuli. Functionally, transmembrane protein which mediates synaptic endocytosis, fitness-based cell culling, neuronal culling, morphogen gradient scaling, and calcium transport. Regulates synaptic endocytosis and hence couples exo- with endocytosis. Controls two major modes of synaptic vesicle (SV) endocytosis in the synaptic boutons of neuromuscular junctions (NMJs); Ca(2+) channel-independent Clathrin-mediated endocytosis (CME) in response to mild stimulation, and Ca(2+) channel-dependent activity-dependent bulk endocytosis (ADBE) in response to strong stimulation. Functions in ADBE and subsequent SV reformation from bulk endosomes by initiating Ca(2+) channel-dependent phosphatidylinositol 4,5-bisphosphate (PtdIns(4,5)P2) compartmentalization in synaptic boutons. There it acts at the periactive zone to provide the low Ca(2+) levels required to initiate Calcineurin activation and upregulate PtdIns(4,5)P2. Conversely PtdIns(4,5)P2 enhances fwe Ca(2+) channel-activity, establishing a positive feedback loop that induces PtdIns(4,5)P2 microdomain at the periactive zone. These microdomains trigger bulk membrane invagination (i.e. ADBE) by triggering actin polymerization while also promoting localization of fwe to bulk endosomes, thereby removing the ADBE trigger to reduce endocytosis and prevent excess membrane uptake. PtdIns(4,5)P2 then promotes SV reformation from the bulk endosomes, to coordinate ADBE and subsequent SV reformation. Different combinations of the flower isoforms at the cell membrane are also required for the identification and elimination of suboptimal or supernumerary cells during development, regeneration, and adulthood. Required for the recognition and elimination of unfit cells in the developing wing during cell competition. In the developing pupal retina, mediates the elimination of unwanted postmitotic neurons, including supernumerary photoreceptor neurons that form at the periphery of the retina and are contained within incomplete ommatidia units. Also required for efficient elimination and replacement of old neurons by newly generated neurons during regeneration in the adult brain following mechanical injury. Downstream of the flower fitness fingerprints, cells identified as unwanted or unfit are eliminated via apoptosis through the expression of ahuizotl (azot). However, the cells marked for elimination by the flower isoforms only undergo apoptosis if additional thresholds are met; (1) their neighboring fit/healthy cells express different levels of the fwe isoforms, and (2) the levels of the protective signal SPARC expressed by the loser or unwanted cells are unable to inhibit caspase activation. These additional thresholds for flower-mediated apoptosis, allows useful cells to recover from transient and limited stress before they are unnecessarily eliminated. Functions with dally and magu in a mechanism of scaling, which utilises apoptosis to ensure that the dpp morphogen gradient, which mediates organ growth, remains proportional to the size of the growing wing. In this mechanism, fwe represses dally- and Magu-dependent activity in expanding the gradient, and dally/Magu inhibits fwe-dependent apoptosis to keep cell death rate low. When the levels of these different proteins are optimally regulated the gradient correctly scales with organ growth but when this fails, fwe-mediated apoptosis is activated to trim the developing tissue to match the correct size of the gradient. The sequence is that of Calcium channel flower from Drosophila ananassae (Fruit fly).